The following is a 269-amino-acid chain: Staphylococcal secretory antigen ssaA2 (269 aa).

The signal sequence occupies residues 1–27; sequence MKKIATATIATAGFATIAIASGNQAHA. A run of 7 repeats spans residues 83–85, 88–90, 91–93, 97–99, 103–105, 106–108, and 115–117. The interval 83-115 is 7 X 3 AA repeats of Y-[NS]-N; that stretch reads YNNYSYNNYNNGYSYNNYSRYNNYSNNNQSYNY. Residues 148-269 enclose the Peptidase C51 domain; it reads MAPSSNGRSI…SQAAGYNFIH (122 aa).

The protein localises to the secreted. Its function is as follows. Not known; immunogenic protein. This is Staphylococcal secretory antigen ssaA2 (ssaA2) from Staphylococcus aureus (strain MRSA252).